The chain runs to 462 residues: L-seryl-tRNA(Sec) selenium transferase (462 aa).

An N6-(pyridoxal phosphate)lysine modification is found at Lys-293.

It belongs to the SelA family. The cofactor is pyridoxal 5'-phosphate.

It is found in the cytoplasm. The catalysed reaction is L-seryl-tRNA(Sec) + selenophosphate + H(+) = L-selenocysteinyl-tRNA(Sec) + phosphate. Its pathway is aminoacyl-tRNA biosynthesis; selenocysteinyl-tRNA(Sec) biosynthesis; selenocysteinyl-tRNA(Sec) from L-seryl-tRNA(Sec) (bacterial route): step 1/1. Functionally, converts seryl-tRNA(Sec) to selenocysteinyl-tRNA(Sec) required for selenoprotein biosynthesis. The chain is L-seryl-tRNA(Sec) selenium transferase from Clostridium botulinum (strain Langeland / NCTC 10281 / Type F).